The following is a 244-amino-acid chain: Cell division protein ZapD (244 aa).

The protein belongs to the ZapD family. Interacts with FtsZ.

The protein localises to the cytoplasm. Functionally, cell division factor that enhances FtsZ-ring assembly. Directly interacts with FtsZ and promotes bundling of FtsZ protofilaments, with a reduction in FtsZ GTPase activity. The polypeptide is Cell division protein ZapD (Shewanella sp. (strain MR-4)).